The sequence spans 785 residues: Probable splicing factor 3A subunit 1 (785 aa).

Position 1 is an N-acetylmethionine (M1). A disordered region spans residues 1-42; that stretch reads MFSSMQILPLEAPPTDGKLGPLPPSQLTDQEVEERELQAEQN. The SURP motif 1 repeat unit spans residues 71-113; the sequence is IVEKTAQFVSKNGLEFEKRIIVSNEKNAKFNFLKSSDPYHAFY. The disordered stretch occupies residues 124-175; sequence NKDGAQGTDDSDGTTDPQLDTGAADESEAGDTQPDLQAQFRIPSKPLEAPEP. The stretch at 193–235 is one SURP motif 2 repeat; that stretch reads IIKLTAQFVARNGKSFLTGLSNRENNNPQFHFMKPTHSMFTFF. 2 disordered regions span residues 522–554 and 639–713; these read NANG…GVPI and RPYG…PNEN. Composition is skewed to pro residues over residues 543-554 and 653-674; these read AALPPPRPGVPI and QPPP…PPLP. Residues 677–686 show a composition bias toward basic and acidic residues; sequence PEAKRQKFDE. Positions 707–782 constitute a Ubiquitin-like domain; it reads VSKPNENDGQ…LTLSLRERGG (76 aa).

Component of splicing factor SF3A which is composed of three subunits.

Its subcellular location is the nucleus. This Arabidopsis thaliana (Mouse-ear cress) protein is Probable splicing factor 3A subunit 1.